A 305-amino-acid chain; its full sequence is Tyrosine recombinase XerC (305 aa).

The Core-binding (CB) domain occupies 2-88 (TNKQRLVHLF…ALRSFYKFLL (87 aa)). One can recognise a Tyr recombinase domain in the interval 109–295 (RIPSFLYEEE…SKDSLRKTYM (187 aa)). Catalysis depends on residues arginine 149, lysine 173, histidine 247, arginine 250, and histidine 273. The active-site O-(3'-phospho-DNA)-tyrosine intermediate is the tyrosine 282.

The protein belongs to the 'phage' integrase family. XerC subfamily. In terms of assembly, forms a cyclic heterotetrameric complex composed of two molecules of XerC and two molecules of XerD.

It is found in the cytoplasm. Functionally, site-specific tyrosine recombinase, which acts by catalyzing the cutting and rejoining of the recombining DNA molecules. The XerC-XerD complex is essential to convert dimers of the bacterial chromosome into monomers to permit their segregation at cell division. It also contributes to the segregational stability of plasmids. The polypeptide is Tyrosine recombinase XerC (Bacillus pumilus (strain SAFR-032)).